A 287-amino-acid chain; its full sequence is Uroplakin-3a (287 aa).

The N-terminal stretch at 1 to 18 (MLLLWALLALGCLRCGWT) is a signal peptide. Topologically, residues 19–207 (VNLQPQLASV…DTWPGRRSGG (189 aa)) are lumenal. Residues Asn-74, Asn-139, and Asn-170 are each glycosylated (N-linked (GlcNAc...) asparagine). A helical transmembrane segment spans residues 208–235 (MIVITSILGSLPFFLLVGFAGAIILSFV). Topologically, residues 236–287 (DMGSSDGEMTHDSQITQEAVPKTLGTSEPSYSSVNRGPPLDRAEVFSSKLQD) are cytoplasmic. The segment at 243–287 (EMTHDSQITQEAVPKTLGTSEPSYSSVNRGPPLDRAEVFSSKLQD) is disordered. Residues 259-270 (LGTSEPSYSSVN) show a composition bias toward polar residues.

It belongs to the uroplakin-3 family. Heterodimer with uroplakin-1B (UPK1B).

Its subcellular location is the endoplasmic reticulum membrane. Functionally, component of the asymmetric unit membrane (AUM); a highly specialized biomembrane elaborated by terminally differentiated urothelial cells. May play an important role in AUM-cytoskeleton interaction in terminally differentiated urothelial cells. It also contributes to the formation of urothelial glycocalyx which may play an important role in preventing bacterial adherence. This chain is Uroplakin-3a (Upk3a), found in Mus musculus (Mouse).